The chain runs to 353 residues: L-tryptophan dehydrogenase (353 aa).

Arg-44 contacts NAD(+). The active-site Proton donor/acceptor is Lys-80. NAD(+) contacts are provided by residues Asp-114, Thr-146, 176–181 (GLGNVG), Lys-204, and 255–257 (AAN).

Belongs to the Glu/Leu/Phe/Val dehydrogenases family. As to quaternary structure, homodimer.

It carries out the reaction L-tryptophan + NAD(+) + H2O = indole-3-pyruvate + NH4(+) + NADH + H(+). Functionally, catalyzes the reversible oxidative deamination of L-tryptophan to indole-3-pyruvate in the presence of NAD(+). Cannot use other L-amino acids and D-Trp. Involved in the biosynthesis of scytonemin, a cyanobacterial radiation-absorbing pigment. The chain is L-tryptophan dehydrogenase from Nostoc punctiforme (strain ATCC 29133 / PCC 73102).